The sequence spans 363 residues: uncharacterized protein (363 aa).

The next 7 helical transmembrane spans lie at 20–40 (WFFT…NTNI), 63–83 (INFA…FLVM), 101–121 (FPLI…GVQS), 141–161 (SVWQ…FTAF), 186–206 (FSLL…IMLA), 227–247 (IFKY…CVVL), and 268–288 (FLIV…WYVL). The disordered stretch occupies residues 329 to 363 (PRADLTPNDTLHMESKKKPLSQSPRVVIEEEDVAE).

The protein localises to the membrane. This is an uncharacterized protein from Caenorhabditis elegans.